The sequence spans 445 residues: Tubulin beta-2 chain (445 aa).

8 residues coordinate GTP: Q12, E73, S142, G146, T147, G148, N208, and N230. E73 contributes to the Mg(2+) binding site.

It belongs to the tubulin family. In terms of assembly, dimer of alpha and beta chains. A typical microtubule is a hollow water-filled tube with an outer diameter of 25 nm and an inner diameter of 15 nM. Alpha-beta heterodimers associate head-to-tail to form protofilaments running lengthwise along the microtubule wall with the beta-tubulin subunit facing the microtubule plus end conferring a structural polarity. Microtubules usually have 13 protofilaments but different protofilament numbers can be found in some organisms and specialized cells. The cofactor is Mg(2+).

It localises to the cytoplasm. It is found in the cytoskeleton. Functionally, tubulin is the major constituent of microtubules, a cylinder consisting of laterally associated linear protofilaments composed of alpha- and beta-tubulin heterodimers. Microtubules grow by the addition of GTP-tubulin dimers to the microtubule end, where a stabilizing cap forms. Below the cap, tubulin dimers are in GDP-bound state, owing to GTPase activity of alpha-tubulin. The chain is Tubulin beta-2 chain (TUBB2) from Suillus bovinus (Jersey cow bolete).